The chain runs to 848 residues: Protein NETWORKED 2C (848 aa).

The 81-residue stretch at 10–90 (YSWWWASHVR…ERYDHISKEL (81 aa)) folds into the NAB domain. Residues 108-141 (FAMNEDDDDDAPVSPRHHKNKTSNKNVPKVPDLP) are disordered. 4 coiled-coil regions span residues 172-204 (LSKTEAVEEIDKLQKEILVLQTEKEFVKTSYEN), 241-278 (EAQILMSTTALKSCQEKLEELRDKQEQNVKEVDVSRKQ), 305-454 (SEKE…KATN), and 752-797 (AKFE…SEEF).

The protein belongs to the NET family.

In terms of biological role, plant-specific actin binding protein. May be part of a membrane-cytoskeletal adapter complex. The polypeptide is Protein NETWORKED 2C (Arabidopsis thaliana (Mouse-ear cress)).